The following is a 413-amino-acid chain: Serine hydroxymethyltransferase (413 aa).

Residues leucine 117 and 121 to 123 (GHL) each bind (6S)-5,6,7,8-tetrahydrofolate. Lysine 226 is modified (N6-(pyridoxal phosphate)lysine). 349 to 351 (SPF) lines the (6S)-5,6,7,8-tetrahydrofolate pocket.

This sequence belongs to the SHMT family. In terms of assembly, homodimer. Pyridoxal 5'-phosphate serves as cofactor.

It localises to the cytoplasm. The catalysed reaction is (6R)-5,10-methylene-5,6,7,8-tetrahydrofolate + glycine + H2O = (6S)-5,6,7,8-tetrahydrofolate + L-serine. It participates in one-carbon metabolism; tetrahydrofolate interconversion. Its pathway is amino-acid biosynthesis; glycine biosynthesis; glycine from L-serine: step 1/1. Its function is as follows. Catalyzes the reversible interconversion of serine and glycine with tetrahydrofolate (THF) serving as the one-carbon carrier. This reaction serves as the major source of one-carbon groups required for the biosynthesis of purines, thymidylate, methionine, and other important biomolecules. Also exhibits THF-independent aldolase activity toward beta-hydroxyamino acids, producing glycine and aldehydes, via a retro-aldol mechanism. The protein is Serine hydroxymethyltransferase of Listeria welshimeri serovar 6b (strain ATCC 35897 / DSM 20650 / CCUG 15529 / CIP 8149 / NCTC 11857 / SLCC 5334 / V8).